The primary structure comprises 207 residues: NADH-quinone oxidoreductase subunit C (207 aa).

The protein belongs to the complex I 30 kDa subunit family. NDH-1 is composed of 14 different subunits. Subunits NuoB, C, D, E, F, and G constitute the peripheral sector of the complex.

The protein localises to the cell inner membrane. It carries out the reaction a quinone + NADH + 5 H(+)(in) = a quinol + NAD(+) + 4 H(+)(out). NDH-1 shuttles electrons from NADH, via FMN and iron-sulfur (Fe-S) centers, to quinones in the respiratory chain. The immediate electron acceptor for the enzyme in this species is believed to be ubiquinone. Couples the redox reaction to proton translocation (for every two electrons transferred, four hydrogen ions are translocated across the cytoplasmic membrane), and thus conserves the redox energy in a proton gradient. The polypeptide is NADH-quinone oxidoreductase subunit C (Jannaschia sp. (strain CCS1)).